A 2320-amino-acid chain; its full sequence is Sperm-associated antigen 17 (2320 aa).

Composition is skewed to basic and acidic residues over residues 139 to 171 (DQQRRENEKKMVEERTKSEKDKGKGKSPKEKKV) and 199 to 210 (RRGEDDEAKSYI). Disordered stretches follow at residues 139–211 (DQQR…SYID), 388–407 (IPEPPPSTAPAPTGKKKAQY), 682–739 (AEQD…SMDQ), 894–928 (SASKIPGPKRSKTNKVSSKTELSDQEKDKEKEKDK), 950–1001 (EERL…AKTL), 1084–1118 (KEKEEKNSEEEEEEEEEKEEVEEKKPKEGEEEKVK), 1191–1221 (QGKGKAKPKGKEKHKDSIKEEELPKEEEKKN), 1334–1367 (SSPDSGPVYTSPELPTSPHNGDLVDSASQPKSET), 1393–1416 (DIIPEVPPPTPVESHIGTWFTTTP), 1983–2028 (KEAS…YENV), and 2080–2101 (TKESVSQRQTENVTRPPTEEPD). Residues 703 to 720 (VTGSTSNSTKPWNSSNRQ) show a composition bias toward polar residues. Residues 865–965 (EEAKYQEAKM…EKKAEKKGKD (101 aa)) are a coiled coil. Composition is skewed to basic and acidic residues over residues 914-928 (ELSDQEKDKEKEKDK) and 950-999 (EERL…EPAK). Residues 1090–1103 (NSEEEEEEEEEKEE) show a composition bias toward acidic residues. 2 stretches are compositionally biased toward basic and acidic residues: residues 1104–1118 (VEEKKPKEGEEEKVK) and 1203–1221 (KHKDSIKEEELPKEEEKKN). Polar residues-rich tracts occupy residues 2012-2028 (VNKSLQTSSSQNQYENV) and 2082-2094 (ESVSQRQTENVTR).

In terms of assembly, interacts (via the C-terminus) with SPAG6; the interaction probably occurs on polymerized microtubules. As to expression, highly expressed in testis, round spermatids, testicular sperm, epididymal sperm and in condensing spermatids (at protein level). Expressed in organs that contain cilia-bearing cells including brain, oviduct, lung, and uterus. Expressed in articular cartilage and bone.

Its subcellular location is the cytoplasm. It is found in the cytoskeleton. The protein resides in the flagellum axoneme. It localises to the cytoplasmic vesicle. The protein localises to the secretory vesicle. Its subcellular location is the acrosome. It is found in the golgi apparatus. Functionally, component of the central pair apparatus of ciliary axonemes. Plays a critical role in the function and structure of motile cilia. May play a role in endochondral bone formation, most likely because of a function in primary cilia of chondrocytes and osteoblasts. Essential for normal spermatogenesis and male fertility. Required for normal manchette structure, transport of proteins along the manchette microtubules and formation of the sperm head and flagellum. Essential for sperm flagellum development and proper assembly of the respiratory motile cilia central pair apparatus, but not the brain ependymal cilia. The sequence is that of Sperm-associated antigen 17 (Spag17) from Mus musculus (Mouse).